The chain runs to 342 residues: 4-hydroxy-2-oxovalerate aldolase (342 aa).

The 253-residue stretch at 5–257 (ITLHDMTLRD…DTGVDVWKIQ (253 aa)) folds into the Pyruvate carboxyltransferase domain. 13–14 (RD) contacts substrate. D14 lines the Mn(2+) pocket. The active-site Proton acceptor is the H17. Substrate is bound by residues S167 and H196. The Mn(2+) site is built by H196 and H198. Position 287 (Y287) interacts with substrate.

This sequence belongs to the 4-hydroxy-2-oxovalerate aldolase family.

It carries out the reaction (S)-4-hydroxy-2-oxopentanoate = acetaldehyde + pyruvate. The chain is 4-hydroxy-2-oxovalerate aldolase from Acidovorax sp. (strain JS42).